A 216-amino-acid polypeptide reads, in one-letter code: Ras-related protein Rab-5C (216 aa).

Residues serine 30, alanine 31, glycine 33, lysine 34, serine 35, serine 36, histidine 47, glutamate 48, threonine 53, and glycine 79 each contribute to the GTP site. Residue serine 35 coordinates Mg(2+). Short sequence motifs (switch) lie at residues 45-57 (QFHEYQESTIGAA) and 78-94 (AGQERYHSLAPMYYRGA). Residue threonine 53 participates in Mg(2+) binding. Residue serine 85 is modified to Phosphoserine. The GTP site is built by asparagine 134, lysine 135, aspartate 137, alanine 165, and lysine 166. Residues 185–216 (NEPQNAAGAPSRNRGVDLQENSPASRSQCCSN) are disordered. Polar residues predominate over residues 203 to 216 (QENSPASRSQCCSN). S-geranylgeranyl cysteine attachment occurs at residues cysteine 213 and cysteine 214.

This sequence belongs to the small GTPase superfamily. Rab family. In terms of assembly, interacts with EEA1 and INCA1. Interacts with GDI1, GDI2, CHML and CHM; phosphorylation at Ser-85 disrupts this interaction. Mg(2+) serves as cofactor. Post-translationally, phosphorylation of Ser-85 in the switch II region by LRRK2 prevents the association of RAB regulatory proteins, including CHM, CHML and RAB GDP dissociation inhibitors GDI1 and GDI2.

The protein resides in the cell membrane. The protein localises to the early endosome membrane. It localises to the melanosome. The catalysed reaction is GTP + H2O = GDP + phosphate + H(+). With respect to regulation, regulated by guanine nucleotide exchange factors (GEFs) which promote the exchange of bound GDP for free GTP. Regulated by GTPase activating proteins (GAPs) which increase the GTP hydrolysis activity. Inhibited by GDP dissociation inhibitors (GDIs). Its function is as follows. The small GTPases Rab are key regulators of intracellular membrane trafficking, from the formation of transport vesicles to their fusion with membranes. Rabs cycle between an inactive GDP-bound form and an active GTP-bound form that is able to recruit to membranes different sets of downstream effectors directly responsible for vesicle formation, movement, tethering and fusion. This Canis lupus familiaris (Dog) protein is Ras-related protein Rab-5C (RAB5C).